The sequence spans 185 residues: Elongation factor P (185 aa).

This sequence belongs to the elongation factor P family.

It localises to the cytoplasm. It functions in the pathway protein biosynthesis; polypeptide chain elongation. Its function is as follows. Involved in peptide bond synthesis. Stimulates efficient translation and peptide-bond synthesis on native or reconstituted 70S ribosomes in vitro. Probably functions indirectly by altering the affinity of the ribosome for aminoacyl-tRNA, thus increasing their reactivity as acceptors for peptidyl transferase. This Fervidobacterium nodosum (strain ATCC 35602 / DSM 5306 / Rt17-B1) protein is Elongation factor P.